We begin with the raw amino-acid sequence, 386 residues long: Patatin-2-Kuras 3 (386 aa).

The N-terminal stretch at 1-23 (MATTKSVLVLFFMILATTSSTCA) is a signal peptide. One can recognise a PNPLA domain in the interval 32–229 (LSIDGGGIKG…TVGDPALLSL (198 aa)). The short motif at 36-41 (GGGIKG) is the GXGXXG element. A GXSXG motif is present at residues 75 to 79 (GTSTG). Ser-77 functions as the Nucleophile in the catalytic mechanism. Residue Asn-115 is glycosylated (N-linked (GlcNAc...) asparagine). Residue Asp-215 is the Proton acceptor of the active site. The short motif at 215–217 (DGA) is the DGA/G element. Positions 321–384 (ENALTGTTTE…DRKKLRANKA (64 aa)) form a coiled coil.

It belongs to the patatin family. Tuber.

It localises to the vacuole. Probable lipolytic acyl hydrolase (LAH), an activity which is thought to be involved in the response of tubers to pathogens. In Solanum tuberosum (Potato), this protein is Patatin-2-Kuras 3 (pat2-k3).